The following is a 1043-amino-acid chain: Probable inorganic carbon transporter subunit DabA (1043 aa).

Residues Cys460, Asp462, His719, and Cys734 each coordinate Zn(2+).

The protein belongs to the inorganic carbon transporter (TC 9.A.2) DabA family. As to quaternary structure, forms a complex with DabB. Requires Zn(2+) as cofactor.

The protein resides in the cell inner membrane. Functionally, part of an energy-coupled inorganic carbon pump. In Thiobacillus denitrificans (strain ATCC 25259 / T1), this protein is Probable inorganic carbon transporter subunit DabA.